Here is a 122-residue protein sequence, read N- to C-terminus: Large ribosomal subunit protein uL14 (122 aa).

The protein belongs to the universal ribosomal protein uL14 family. Part of the 50S ribosomal subunit. Forms a cluster with proteins L3 and L19. In the 70S ribosome, L14 and L19 interact and together make contacts with the 16S rRNA in bridges B5 and B8.

Its function is as follows. Binds to 23S rRNA. Forms part of two intersubunit bridges in the 70S ribosome. In Xanthomonas axonopodis pv. citri (strain 306), this protein is Large ribosomal subunit protein uL14.